The primary structure comprises 343 residues: S-adenosylmethionine:tRNA ribosyltransferase-isomerase (343 aa).

Belongs to the QueA family. Monomer.

The protein resides in the cytoplasm. It catalyses the reaction 7-aminomethyl-7-carbaguanosine(34) in tRNA + S-adenosyl-L-methionine = epoxyqueuosine(34) in tRNA + adenine + L-methionine + 2 H(+). It functions in the pathway tRNA modification; tRNA-queuosine biosynthesis. In terms of biological role, transfers and isomerizes the ribose moiety from AdoMet to the 7-aminomethyl group of 7-deazaguanine (preQ1-tRNA) to give epoxyqueuosine (oQ-tRNA). The chain is S-adenosylmethionine:tRNA ribosyltransferase-isomerase from Geobacter sulfurreducens (strain ATCC 51573 / DSM 12127 / PCA).